Here is a 153-residue protein sequence, read N- to C-terminus: Peptidyl-prolyl cis-trans isomerase FKBP15-1 (153 aa).

An N-terminal signal peptide occupies residues 1-25 (MMSSASAMKAVGFLLLLTILTLAYA). The 89-residue stretch at 52 to 140 (GDKIKVHYRG…IFDTELVAVN (89 aa)) folds into the PPIase FKBP-type domain. A Prevents secretion from ER motif is present at residues 150–153 (KNEL).

The protein belongs to the FKBP-type PPIase family.

It is found in the endoplasmic reticulum lumen. It carries out the reaction [protein]-peptidylproline (omega=180) = [protein]-peptidylproline (omega=0). Its function is as follows. PPIases accelerate the folding of proteins. It catalyzes the cis-trans isomerization of proline imidic peptide bonds in oligopeptides. This Arabidopsis thaliana (Mouse-ear cress) protein is Peptidyl-prolyl cis-trans isomerase FKBP15-1 (FKBP15-1).